Reading from the N-terminus, the 763-residue chain is U3 small nucleolar RNA-associated protein 25 homolog (763 aa).

The interval 1–164 (MGKRRSRGRS…SQKSSEEFTD (164 aa)) is disordered. Promotes p53/TP53 degradation stretches follow at residues 1-190 (MGKR…SQRT) and 580-642 (VQLP…KKEE). The residue at position 10 (Ser-10) is a Phosphoserine. Residues 25–43 (RDFGEEHPFYDRVSKKEVK) are compositionally biased toward basic and acidic residues. 3 positions are modified to phosphoserine: Ser-52, Ser-60, and Ser-64. A compositionally biased stretch (basic and acidic residues) spans 54-70 (DSSHSESESESEQEHVS). Residues 84-119 (EEEEEEEEEEEEEEEDKEEVDDSAVGDSEMNGEDGG) show a composition bias toward acidic residues. A represses p53/TP53 degradation region spans residues 643-704 (LNFTHICEYT…YELPTYAHFY (62 aa)).

The protein belongs to the UTP25 family. As to quaternary structure, interacts with CAPN3; the interaction is required for CAPN3 translocation to the nucleolus. Phosphorylated. Phosphorylation is required to promote p53/TP53 degradation in the nucleolus which promotes cell cycle progression and liver development.

The protein localises to the nucleus. It localises to the nucleolus. Its function is as follows. Component of the ribosomal small subunit processome for the biogenesis of ribosomes, functions in pre-ribosomal RNA (pre-rRNA) processing. Essential for embryonic development in part through the regulation of p53 pathway. Controls the expansion growth of digestive organs and liver. Also involved in the sympathetic neuronal development. Mediates, with CAPN3, the proteasome-independent degradation of p53/TP53. The polypeptide is U3 small nucleolar RNA-associated protein 25 homolog (Rattus norvegicus (Rat)).